A 187-amino-acid chain; its full sequence is UPF0301 protein PBPRA3139 (187 aa).

This sequence belongs to the UPF0301 (AlgH) family.

The chain is UPF0301 protein PBPRA3139 from Photobacterium profundum (strain SS9).